Here is a 111-residue protein sequence, read N- to C-terminus: MESSAKLSSVRLSPRKTRLVVDLVRGKGIQTALNTLRFSPQPSAKLISKLLSSAVANAEQKGCSDVDKLFVKTIFVDGGAVLKRFTPRAMGRASKIRKPTSHITVVLAEKK.

This sequence belongs to the universal ribosomal protein uL22 family. As to quaternary structure, part of the 50S ribosomal subunit.

Its function is as follows. This protein binds specifically to 23S rRNA; its binding is stimulated by other ribosomal proteins, e.g. L4, L17, and L20. It is important during the early stages of 50S assembly. It makes multiple contacts with different domains of the 23S rRNA in the assembled 50S subunit and ribosome. The globular domain of the protein is located near the polypeptide exit tunnel on the outside of the subunit, while an extended beta-hairpin is found that lines the wall of the exit tunnel in the center of the 70S ribosome. The polypeptide is Large ribosomal subunit protein uL22 (Citrifermentans bemidjiense (strain ATCC BAA-1014 / DSM 16622 / JCM 12645 / Bem) (Geobacter bemidjiensis)).